Consider the following 263-residue polypeptide: Follistatin-related protein 3 (263 aa).

An N-terminal signal peptide occupies residues 1 to 26; it reads MRPGAPGPLWPLPWGALAWAVGFVSS. The TB domain maps to 36 to 107; the sequence is GVCWLQQGQE…SCDGVECGPG (72 aa). Cystine bridges form between C38–C61, C48–C92, C62–C95, C99–C110, C104–C119, C121–C153, C125–C146, C135–C167, C171–C182, C176–C192, C195–C229, C200–C222, and C211–C243. N73 carries an N-linked (GlcNAc...) asparagine glycan. A Follistatin-like 1 domain is found at 99-119; sequence CDGVECGPGKACRMLGGRPRC. The Kazal-like 1 domain maps to 113–169; it reads LGGRPRCECAPDCSGLPARLQVCGSDGATYRDECELRAARCRGHPDLSVMYRGRCRK. The region spanning 170 to 193 is the Follistatin-like 2 domain; it reads SCEHVVCPRPQSCVVDQTGSAHCV. Positions 189–245 constitute a Kazal-like 2 domain; the sequence is SAHCVVCRAAPCPVPSSPGQELCGNNNVTYISSCHMRQATCFLGRSIGVRHAGSCAG. N215 carries an N-linked (GlcNAc...) asparagine glycan. The segment at 242-263 is disordered; the sequence is SCAGTPEEPPGGESAEEEENFV. Phosphoserine; by FAM20C is present on S255.

As to quaternary structure, interacts with INHBA and INHBB. Interacts with FN1. Interacts with ADAM12. Isoform 2 interacts with MLLT10; the interaction enhances MLLT10 in vitro transcriptional activity and self-association. Interacts with MSTN. As to expression, expressed in a wide range of tissues.

The protein resides in the secreted. It is found in the nucleus. Functionally, isoform 1 or the secreted form is a binding and antagonizing protein for members of the TGF-beta family, such as activin, BMP2 and MSTN. Inhibits activin A-, activin B-, BMP2- and MSDT-induced cellular signaling; more effective on activin A than on activin B. Involved in bone formation; inhibits osteoclast differentiation. Involved in hematopoiesis; involved in differentiation of hemopoietic progenitor cells, increases hematopoietic cell adhesion to fibronectin and seems to contribute to the adhesion of hematopoietic precursor cells to the bone marrow stroma. Isoform 2 or the nuclear form is probably involved in transcriptional regulation via interaction with MLLT10. This is Follistatin-related protein 3 (FSTL3) from Homo sapiens (Human).